The following is a 241-amino-acid chain: MRFIMPIKYKRMLLKLSGEALMGKDSYGINTGVLEFVAGEIKELVAMGVELGVVVGAGNIFRGMAGASKGMDRATADNMGMLATVMNSLAMQDALERSGVITRAMSAIPMQSICESYIRRRATRHLEKGRVVIFAAGTGNPYFTTDSAGVLRALEIDADIVVKATKVDGVYDKDPMIHDDAVKFEHLTYDDVLRKGLKVMDAAGIALAKDDDKPIMVLNMSVAGNMKKAALGERVGTLITA.

Residues Lys-15–Gly-18, Gly-58, and Arg-62 each bind ATP. UMP is bound by residues Asp-77 and Thr-138–Thr-145. Residues Thr-165, Tyr-171, and Asp-174 each coordinate ATP.

Belongs to the UMP kinase family. As to quaternary structure, homohexamer.

Its subcellular location is the cytoplasm. It carries out the reaction UMP + ATP = UDP + ADP. It functions in the pathway pyrimidine metabolism; CTP biosynthesis via de novo pathway; UDP from UMP (UMPK route): step 1/1. Inhibited by UTP. Its function is as follows. Catalyzes the reversible phosphorylation of UMP to UDP. The protein is Uridylate kinase of Desulfotalea psychrophila (strain LSv54 / DSM 12343).